The following is a 1737-amino-acid chain: Complement C4 (1737 aa).

The signal sequence occupies residues 1 to 19 (MRLLWGLAWAFSFFASSLQ). C66 and C95 are disulfide-bonded. N-linked (GlcNAc...) asparagine glycans are attached at residues N224 and N664. C633 and C667 are disulfide-bonded. Positions 674–677 (RQKR) are excised as a propeptide. 3 disulfide bridges follow: C700-C726, C701-C733, and C714-C734. Residues 700–734 (CCQDGMTKLPMARTCEQRAARVPQPACREPFLSCC) form the Anaphylatoxin-like domain. A glycan (N-linked (GlcNAc...) asparagine) is linked at N743. Residues 1005–1008 (CAEQ) constitute a cross-link (isoglutamyl cysteine thioester (Cys-Gln)). 2 N-linked (GlcNAc...) asparagine glycosylation sites follow: N1323 and N1386. Residues Y1412, Y1414, and Y1416 each carry the sulfotyrosine modification. Residues 1443–1446 (RRRR) constitute a propeptide that is removed on maturation. 5 cysteine pairs are disulfide-bonded: C1464–C1528, C1576–C1581, C1588–C1666, C1611–C1735, and C1711–C1720. The 148-residue stretch at 1588–1735 (CPRQRRSLER…FLQEYSSQGC (148 aa)) folds into the NTR domain. Y1676 carries the sulfotyrosine modification.

In absence of complement activation, circulates in blood as a disulfide-linked trimer of an alpha, beta and gamma chain. In terms of assembly, complement C4b is composed of complement C4b-A, complement C4 beta and complement C4 gamma chains that are associated via disulfide bonds. Non-enzymatic component of the C3 convertase, also named C4bC2b, composed of the serine protease complement C2b (C2), as well as complement C4b. Non-enzymatic component of the C5 convertase, also named C4bC2bC3b, composed of the serine protease complement C2b (C2), complement C3b, as well as complement C4b. Prior to secretion, the single-chain precursor is enzymatically cleaved by plasminogen (PLG) to yield non-identical chains alpha, beta and gamma. During activation of the complement systems, the alpha chain is cleaved into C4a and C4b by different proteases depending on the complement pathway: C4b stays linked to the beta and gamma chains, while C4a is released in the plasma. The alpha chain is cleaved by C1S to generate C4a and C4b following activation by the classical complement system. The alpha chain is cleaved to generate C4a and C4b by MASP2 following activation by the lectin complement system. The alpha chain is cleaved by GZMK to generate C4a and C4b following activation by the GZMK complement system. Further degradation of C4b by C1 into the inactive fragments C4c and C4d blocks the generation of C3 convertase. The proteolytic cleavages often are incomplete so that many structural forms can be found in plasma. In terms of processing, upon activation, the internal thioester bond reacts with carbohydrate antigens on the target surface to form amide or ester bonds, leading to covalent association with the surface of pathogens. Post-translationally, complement C4b interacts with complement C3b via a thioester linkage. N- and O-glycosylated. O-glycosylated with a core 1 or possibly core 8 glycan.

It localises to the secreted. It is found in the cell surface. Precursor of non-enzymatic components of the classical, lectin and GZMK complement pathways, which consist in a cascade of proteins that leads to phagocytosis and breakdown of pathogens and signaling that strengthens the adaptive immune system. Functionally, non-enzymatic component of C3 and C5 convertases. Generated following cleavage by complement proteases (C1S, MASP2 or GZMK, depending on the complement pathway), it covalently attaches to the surface of pathogens, where it acts as an opsonin that marks the surface of antigens for removal. It then recruits the serine protease complement C2b to form the C3 and C5 convertases, which cleave and activate C3 and C5, respectively, the next components of the complement pathways. Complement C4b-A isotype is responsible for effective binding to form amide bonds with immune aggregates or protein antigens, while complement C4b-B isotype catalyzes the transacylation of the thioester carbonyl group to form ester bonds with carbohydrate antigens. Its function is as follows. Putative humoral mediator released following cleavage by complement proteases (C1S, MASP2 or GZMK, depending on the complement pathway). While it is strongly similar to anaphylatoxins, its role is unclear. Was reported to act as a mediator of local inflammatory process; however these effects were probably due to contamination with C3a and/C5a anaphylatoxins in biological assays. The polypeptide is Complement C4 (Rattus norvegicus (Rat)).